We begin with the raw amino-acid sequence, 66 residues long: Large ribosomal subunit protein bL35 (66 aa).

Belongs to the bacterial ribosomal protein bL35 family.

The protein is Large ribosomal subunit protein bL35 of Neorickettsia sennetsu (strain ATCC VR-367 / Miyayama) (Ehrlichia sennetsu).